The chain runs to 553 residues: Methyl-coenzyme M reductase II subunit alpha (553 aa).

Position 150 (Gln-150) interacts with coenzyme F430. Coenzyme B is bound by residues Arg-228, 259 to 260 (KH), and Arg-273. Residue His-260 is modified to Pros-methylhistidine. At Arg-274 the chain carries 5-methylarginine. Coenzyme M is bound at residue Tyr-335. 2-methylglutamine is present on Gln-402. Tyr-446 is a binding site for coenzyme M. Gly-447 is modified (1-thioglycine). Residue Asp-452 is modified to (Z)-2,3-didehydroaspartate. Cys-454 is subject to S-methylcysteine.

Belongs to the methyl-coenzyme M reductase alpha subunit family. MCR is a hexamer of two alpha, two beta, and two gamma chains, forming a dimer of heterotrimers. Coenzyme F430 is required as a cofactor. In terms of processing, the alpha subunit contains six modified amino acids near the active site region. Is methylated on His-260, Arg-274, Gln-402 and Cys-454, probably by the action of specific S-adenosylmethionine-dependent methyltransferases. Also contains a thioglycine at position 447, forming a thiopeptide bond. Contains a didehydroaspartate residue at position 452. The methylation on C5 of Arg-274 is a post-translational methylation not essential in vivo, but which plays a role for the stability and structural integrity of MCR.

The catalysed reaction is coenzyme B + methyl-coenzyme M = methane + coenzyme M-coenzyme B heterodisulfide. It functions in the pathway one-carbon metabolism; methyl-coenzyme M reduction; methane from methyl-coenzyme M: step 1/1. In terms of biological role, component of the methyl-coenzyme M reductase (MCR) I that catalyzes the reductive cleavage of methyl-coenzyme M (CoM-S-CH3 or 2-(methylthio)ethanesulfonate) using coenzyme B (CoB or 7-mercaptoheptanoylthreonine phosphate) as reductant which results in the production of methane and the mixed heterodisulfide of CoB and CoM (CoM-S-S-CoB). This is the final step in methanogenesis. This chain is Methyl-coenzyme M reductase II subunit alpha (mrtA), found in Methanothermobacter marburgensis (strain ATCC BAA-927 / DSM 2133 / JCM 14651 / NBRC 100331 / OCM 82 / Marburg) (Methanobacterium thermoautotrophicum).